Here is a 262-residue protein sequence, read N- to C-terminus: Capsid protein (262 aa).

Positions 183 to 262 are disordered; that stretch reads APTIEAITRP…SHHRSPSPRK (80 aa). The Bipartite nuclear localization signal signature appears at 215–233; it reads RRRKVKTTVVYGRRRSKSR. Residues 215–234 show a composition bias toward basic residues; sequence RRRKVKTTVVYGRRRSKSRD. A phosphoserine; by host mark is found at Ser-232, Ser-239, and Ser-245. A compositionally biased stretch (basic residues) spans 252–262; it reads SSHHRSPSPRK. An RNA binding region spans residues 254–260; sequence HHRSPSP.

It belongs to the avihepadnavirus core antigen family. In terms of assembly, homodimerizes, then multimerizes.

The protein localises to the virion. Its subcellular location is the host cytoplasm. In terms of biological role, self assembles to form an icosahedral capsid. Most capsid appear to be large particles with an icosahedral symmetry of T=4 and consist of 240 copies of capsid protein, though a fraction forms smaller T=3 particles consisting of 180 capsid proteins. Entering capsid are transported along microtubules to the nucleus. Phosphorylation of the capsid is thought to induce exposure of nuclear localization signal in the C-terminal portion of the capsid protein that allows binding to the nuclear pore complex via the importin (karyopherin-) alpha and beta. Capsids are imported in intact form through the nuclear pore into the nuclear basket, where it probably binds NUP153. Only capsids that contain the mature viral genome can release the viral DNA and capsid protein into the nucleoplasm. Immature capsids get stucked in the basket. Capsids encapsulate the pre-genomic RNA and the P protein. Pre-genomic RNA is reverse transcribed into DNA while the capsid is still in the cytoplasm. The capsid can then either be directed to the nucleus, providing more genome for transcription, or bud through the endoplasmic reticulum to provide new virions. The sequence is that of Capsid protein (C) from Anas (ducks).